The chain runs to 434 residues: Glutamyl-tRNA reductase (434 aa).

Residues 49–52 (TCNR), S109, 114–116 (EPQ), and Q120 contribute to the substrate site. The active-site Nucleophile is C50. Residue 189 to 194 (GAGEMA) participates in NADP(+) binding.

Belongs to the glutamyl-tRNA reductase family. In terms of assembly, homodimer.

It catalyses the reaction (S)-4-amino-5-oxopentanoate + tRNA(Glu) + NADP(+) = L-glutamyl-tRNA(Glu) + NADPH + H(+). It participates in porphyrin-containing compound metabolism; protoporphyrin-IX biosynthesis; 5-aminolevulinate from L-glutamyl-tRNA(Glu): step 1/2. Its function is as follows. Catalyzes the NADPH-dependent reduction of glutamyl-tRNA(Glu) to glutamate 1-semialdehyde (GSA). The chain is Glutamyl-tRNA reductase from Desulfatibacillum aliphaticivorans.